We begin with the raw amino-acid sequence, 438 residues long: 2-(3-amino-3-carboxypropyl)histidine synthase subunit 1 (438 aa).

A disordered region spans residues 7–29 (SGAAEQGGRDGPGRGRAPRGRVA). [4Fe-4S] cluster contacts are provided by Cys110, Cys214, and Cys342. The interval 391-421 (VNHGQDRRPHAPGRPARGKVQEGSARPPSAV) is disordered.

Belongs to the DPH1/DPH2 family. DPH1 subfamily. Component of the 2-(3-amino-3-carboxypropyl)histidine synthase complex composed of DPH1, DPH2, DPH3 and a NADH-dependent reductase. Interacts with DPH2. Interacts with RBM8A. [4Fe-4S] cluster is required as a cofactor. As to expression, expressed in heart, brain, placenta, lung, liver, skeletal muscle, kidney, pancreas, spleen, thymus, mammary gland, colon, small intestine, testis and ovary. Reduced expression in primary breast and ovarian tumors.

The protein localises to the nucleus. The protein resides in the cytoplasm. It catalyses the reaction L-histidyl-[translation elongation factor 2] + S-adenosyl-L-methionine = 2-[(3S)-amino-3-carboxypropyl]-L-histidyl-[translation elongation factor 2] + S-methyl-5'-thioadenosine + H(+). It functions in the pathway protein modification; peptidyl-diphthamide biosynthesis. In terms of biological role, catalyzes the first step of diphthamide biosynthesis, a post-translational modification of histidine which occurs in elongation factor 2. DPH1 and DPH2 transfer a 3-amino-3-carboxypropyl (ACP) group from S-adenosyl-L-methionine (SAM) to a histidine residue, the reaction is assisted by a reduction system comprising DPH3 and a NADH-dependent reductase. Acts as a tumor suppressor. The chain is 2-(3-amino-3-carboxypropyl)histidine synthase subunit 1 from Homo sapiens (Human).